The sequence spans 200 residues: Protein GrpE (200 aa).

The segment covering 1-27 (MTKQEKAENQEKPTEETVEETPKKETP) has biased composition (basic and acidic residues). The tract at residues 1–50 (MTKQEKAENQEKPTEETVEETPKKETPFEPVMEADEVEETTEAQAPVEEA) is disordered. The segment covering 32–41 (MEADEVEETT) has biased composition (acidic residues).

This sequence belongs to the GrpE family. In terms of assembly, homodimer.

It localises to the cytoplasm. Its function is as follows. Participates actively in the response to hyperosmotic and heat shock by preventing the aggregation of stress-denatured proteins, in association with DnaK and GrpE. It is the nucleotide exchange factor for DnaK and may function as a thermosensor. Unfolded proteins bind initially to DnaJ; upon interaction with the DnaJ-bound protein, DnaK hydrolyzes its bound ATP, resulting in the formation of a stable complex. GrpE releases ADP from DnaK; ATP binding to DnaK triggers the release of the substrate protein, thus completing the reaction cycle. Several rounds of ATP-dependent interactions between DnaJ, DnaK and GrpE are required for fully efficient folding. This Latilactobacillus sakei subsp. sakei (strain 23K) (Lactobacillus sakei subsp. sakei) protein is Protein GrpE.